A 1621-amino-acid polypeptide reads, in one-letter code: Cilia- and flagella-associated protein 43 (1621 aa).

WD repeat units lie at residues 97–138, 141–180, 293–330, 334–373, 377–417, 464–503, 634–673, and 679–721; these read GAQL…PLCS, DSQT…NQYQ, LLEG…VKLE, NAQE…ETYK, VYSR…SVSS, LYCV…SFQV, GSQL…TMAQ, and YHNG…SSRL. Coiled-coil stretches lie at residues 792–812, 850–870, 1026–1046, 1098–1118, 1150–1177, 1362–1389, 1451–1514, and 1591–1611; these read IKRK…AEKE, TEEQ…VRQE, CRQK…IQEI, VEEA…ALDD, TEEE…YSKE, DEKM…FQLD, IFQL…QEKQ, and AKIQ…LRMK.

This sequence belongs to the CFAP43 family.

The protein localises to the cytoplasm. It is found in the cytoskeleton. The protein resides in the cilium axoneme. Its function is as follows. Involved in the regulation of the beating frequency of motile cilia in multiciliated cells of the larval epidermis. The sequence is that of Cilia- and flagella-associated protein 43 (cfap43) from Xenopus laevis (African clawed frog).